Consider the following 2360-residue polypeptide: Protein Ycf2 (2360 aa).

Disordered regions lie at residues 172 to 193, 225 to 255, and 944 to 995; these read SSQL…GTED, TEIE…EMNN, and KRKK…KRKE. The span at 234–244 shows a compositional bias: low complexity; that stretch reads KGLSGSSSKSR. Over residues 245–254 the composition is skewed to basic and acidic residues; sequence LFTEGEKEMN. A compositionally biased stretch (basic residues) spans 944 to 959; that stretch reads KRKKKKPEKRKKKKPE. Residues 960-993 show a composition bias toward basic and acidic residues; sequence KRKEKKPEKRKEKKPEKRKEKKPEKRKEKKPEKR. 1425-1432 is a binding site for ATP; sequence GSIGSGRS. 3 disordered regions span residues 1499-1518, 1843-2031, and 2098-2214; these read YEDR…YEPG, LVGS…LLRP, and PAEE…DGFS. Residues 1849-2011 show a composition bias toward acidic residues; it reads TEEEVEGTEE…VEGTEDEEVE (163 aa). Basic and acidic residues predominate over residues 2012–2024; it reads GTEKDSSQFDNDR. 2 stretches are compositionally biased toward acidic residues: residues 2098 to 2115 and 2122 to 2197; these read PAEE…EALE and GEEE…ENDS.

It belongs to the Ycf2 family.

It is found in the plastid. Its subcellular location is the chloroplast stroma. Probable ATPase of unknown function. Its presence in a non-photosynthetic plant (Epifagus virginiana) and experiments in tobacco indicate that it has an essential function which is probably not related to photosynthesis. This chain is Protein Ycf2, found in Oenothera argillicola (Appalachian evening primrose).